A 565-amino-acid polypeptide reads, in one-letter code: Proline--tRNA ligase (565 aa).

It belongs to the class-II aminoacyl-tRNA synthetase family. ProS type 1 subfamily. In terms of assembly, homodimer.

Its subcellular location is the cytoplasm. It carries out the reaction tRNA(Pro) + L-proline + ATP = L-prolyl-tRNA(Pro) + AMP + diphosphate. Catalyzes the attachment of proline to tRNA(Pro) in a two-step reaction: proline is first activated by ATP to form Pro-AMP and then transferred to the acceptor end of tRNA(Pro). As ProRS can inadvertently accommodate and process non-cognate amino acids such as alanine and cysteine, to avoid such errors it has two additional distinct editing activities against alanine. One activity is designated as 'pretransfer' editing and involves the tRNA(Pro)-independent hydrolysis of activated Ala-AMP. The other activity is designated 'posttransfer' editing and involves deacylation of mischarged Ala-tRNA(Pro). The misacylated Cys-tRNA(Pro) is not edited by ProRS. This chain is Proline--tRNA ligase, found in Lactobacillus helveticus (strain DPC 4571).